We begin with the raw amino-acid sequence, 451 residues long: Probable metal transport system membrane protein CT_069 (451 aa).

8 helical membrane-spanning segments follow: residues 14-34, 38-58, 70-90, 100-120, 145-165, 192-212, 233-253, and 269-289; these read SFLAVSLICMTTALWGTILLV, PLLSESLSHACYPGLLIGALL, WVIIFFGCLASVLGCLGISFL, SALCLVLVSFFGVGVILVSYV, TEAKLALIIFCLSAVVLWWWY, VLVFISLVIVSGVRSVGILLI, ILILSSIFGGICGALGCYFSV, and ILPTGPLVVFFAGVLVFLCLI. The segment at 432-451 is disordered; that stretch reads PDYDPHQREIPKRTRKSDGC. Positions 434–451 are enriched in basic and acidic residues; that stretch reads YDPHQREIPKRTRKSDGC.

This sequence belongs to the ABC-3 integral membrane protein family.

The protein localises to the cell inner membrane. Its function is as follows. Part of an ATP-driven transport system CT_067/CT_068/CT_069/CT_070 for a metal. The protein is Probable metal transport system membrane protein CT_069 of Chlamydia trachomatis serovar D (strain ATCC VR-885 / DSM 19411 / UW-3/Cx).